Reading from the N-terminus, the 200-residue chain is Probable nicotinate-nucleotide adenylyltransferase (200 aa).

This sequence belongs to the NadD family.

It catalyses the reaction nicotinate beta-D-ribonucleotide + ATP + H(+) = deamido-NAD(+) + diphosphate. Its pathway is cofactor biosynthesis; NAD(+) biosynthesis; deamido-NAD(+) from nicotinate D-ribonucleotide: step 1/1. Functionally, catalyzes the reversible adenylation of nicotinate mononucleotide (NaMN) to nicotinic acid adenine dinucleotide (NaAD). This Clavibacter michiganensis subsp. michiganensis (strain NCPPB 382) protein is Probable nicotinate-nucleotide adenylyltransferase.